Consider the following 157-residue polypeptide: 2-C-methyl-D-erythritol 2,4-cyclodiphosphate synthase (157 aa).

A divalent metal cation contacts are provided by aspartate 8 and histidine 10. Residues 8 to 10 (DVH) and 34 to 35 (HS) each bind 4-CDP-2-C-methyl-D-erythritol 2-phosphate. A divalent metal cation is bound at residue histidine 42. 4-CDP-2-C-methyl-D-erythritol 2-phosphate contacts are provided by residues 56–58 (DIG), 61–65 (FPDNE), 132–135 (TTTE), phenylalanine 139, and arginine 142.

It belongs to the IspF family. In terms of assembly, homotrimer. It depends on a divalent metal cation as a cofactor.

It catalyses the reaction 4-CDP-2-C-methyl-D-erythritol 2-phosphate = 2-C-methyl-D-erythritol 2,4-cyclic diphosphate + CMP. It participates in isoprenoid biosynthesis; isopentenyl diphosphate biosynthesis via DXP pathway; isopentenyl diphosphate from 1-deoxy-D-xylulose 5-phosphate: step 4/6. Its function is as follows. Involved in the biosynthesis of isopentenyl diphosphate (IPP) and dimethylallyl diphosphate (DMAPP), two major building blocks of isoprenoid compounds. Catalyzes the conversion of 4-diphosphocytidyl-2-C-methyl-D-erythritol 2-phosphate (CDP-ME2P) to 2-C-methyl-D-erythritol 2,4-cyclodiphosphate (ME-CPP) with a corresponding release of cytidine 5-monophosphate (CMP). This is 2-C-methyl-D-erythritol 2,4-cyclodiphosphate synthase from Desulforamulus reducens (strain ATCC BAA-1160 / DSM 100696 / MI-1) (Desulfotomaculum reducens).